Consider the following 212-residue polypeptide: Adenylate kinase (212 aa).

10 to 15 is a binding site for ATP; it reads GAGKGT. The interval 30-59 is NMP; it reads AIGDIFRTIIKTSTSEAELINNYVKQGELI. AMP contacts are provided by residues Arg36, 57–59, 85–88, and Gln92; these read ELI and GYPR. The segment at 122–160 is LID; it reads GRYSCKNCGKIYNRYFLQPKTDNVCDVCGSSTFDYRKDD. Arg123 provides a ligand contact to ATP. Zn(2+)-binding residues include Cys126 and Cys129. 132 to 133 contacts ATP; sequence IY. Residues Cys146 and Cys149 each coordinate Zn(2+). AMP-binding residues include Arg157 and Arg168. Position 196 (Lys196) interacts with ATP.

The protein belongs to the adenylate kinase family. In terms of assembly, monomer.

Its subcellular location is the cytoplasm. It catalyses the reaction AMP + ATP = 2 ADP. It participates in purine metabolism; AMP biosynthesis via salvage pathway; AMP from ADP: step 1/1. Catalyzes the reversible transfer of the terminal phosphate group between ATP and AMP. Plays an important role in cellular energy homeostasis and in adenine nucleotide metabolism. The chain is Adenylate kinase from Rickettsia africae (strain ESF-5).